Consider the following 654-residue polypeptide: Myrosinase-binding protein 2 (654 aa).

Jacalin-type lectin domains follow at residues 2-151, 156-291, 346-489, and 502-645; these read SEKV…HFFA, LKHF…HFAP, PNKV…YFAP, and AKKL…HAVP. Pro residues predominate over residues 314 to 346; the sequence is VPAPSPAPAPSPAPAPAPAPAPAPTPAPAPAPP. The segment at 314 to 355 is disordered; it reads VPAPSPAPAPSPAPAPAPAPAPAPTPAPAPAPPNKVEALGGN.

Belongs to the jacalin lectin family. In terms of tissue distribution, expressed in flowers. Detected mainly in ovules and styles of immature flowers, but also in pistils, styles, stamens, petals and embryos. Not detected in leaves.

The sequence is that of Myrosinase-binding protein 2 (MBP2) from Arabidopsis thaliana (Mouse-ear cress).